We begin with the raw amino-acid sequence, 494 residues long: MASGILGSIKEEVTCPICLELLTEPLSLDCGHSFCQACITANHKESMLHQGERSCPLCRLPYQSENLRPNRHLASIVERLREVMLRPEERQNVDHCARHGEKLLLFCEQDGNIICWLCERSQEHRGHNTFLVEEVAQKYREKLQVALETMRQKQQDAEKLEADVRQEQASWKIQIQNDKTNIMAEFKQLRDILDCEESNELQNLEKEEKNILKRLVQSENDMVLQTQSVRVLISDLERRLQGSVVELLQDVDGVIKRIEKVTLQKPKTFLNEKRRVFRAPDLKRMLQVLKELTEVQRYWAHVTLVPSHPSYTIISEDGRQVRYQKPIRHLLVKVQYFYGVLGSPSITSGKHYWEVDVSNKRAWTLGVCVSLKCTANQSVSGTENYQPKNGYWVIGLRNAGNYRAFQSSFEFRDFLAGSRLTLSPPLIVPLFMTICPNRVGVFLDYEARTISFFNVTSNGFLIYKFSDCHFSYPVFPYFNPMTCELPMTLCSPSS.

Ala2 is subject to N-acetylalanine. An RING-type zinc finger spans residues 15 to 59 (CPICLELLTEPLSLDCGHSFCQACITANHKESMLHQGERSCPLCR). The segment at 91 to 132 (QNVDHCARHGEKLLLFCEQDGNIICWLCERSQEHRGHNTFLV) adopts a B box-type zinc-finger fold. Residues Cys96, His99, Cys118, and His124 each contribute to the Zn(2+) site. Positions 132 to 223 (VEEVAQKYRE…RLVQSENDMV (92 aa)) form a coiled coil. Residues 186-199 (FKQLRDILDCEESN) form a required for interaction with GABARAP and for autophagy region. A B30.2/SPRY domain is found at 280–494 (PDLKRMLQVL…LPMTLCSPSS (215 aa)).

The protein belongs to the TRIM/RBCC family. Can form homodimers and homotrimers. In addition to lower-order dimerization, also exhibits a higher-order multimerization and both low- and high-order multimerizations are essential for its restriction activity. Interacts with BTBD1 and BTBD2. Interacts with PSMC4, PSMC5, PSMD7 and HSPA8/HSC70. Interacts (via B30.2/SPRY domain) with HSPA1A/B. Interacts with PSMC2, MAP3K7/TAK1, TAB2 and TAB3. Interacts with SQSTM1. Interacts with TRIM6 and TRIM34. Interacts with ULK1 (phosphorylated form), GABARAP, GABARAPL1, GABARAPL2, MAP1LC3A, MAP1LC3C and BECN1. Post-translationally, degraded in a proteasome-independent fashion in the absence of viral infection but in a proteasome-dependent fashion following exposure to restriction sensitive virus. Autoubiquitinated in a RING finger- and UBE2D2-dependent manner. Monoubiquitinated by TRIM21. Deubiquitinated by Yersinia YopJ. Ubiquitination may not lead to proteasomal degradation.

The protein resides in the cytoplasm. The protein localises to the nucleus. The enzyme catalyses S-ubiquitinyl-[E2 ubiquitin-conjugating enzyme]-L-cysteine + [acceptor protein]-L-lysine = [E2 ubiquitin-conjugating enzyme]-L-cysteine + N(6)-ubiquitinyl-[acceptor protein]-L-lysine.. It functions in the pathway protein modification; protein ubiquitination. Capsid-specific restriction factor that prevents infection from non-host-adapted retroviruses. Blocks viral replication early in the life cycle, after viral entry but before reverse transcription. In addition to acting as a capsid-specific restriction factor, also acts as a pattern recognition receptor that activates innate immune signaling in response to the retroviral capsid lattice. Binding to the viral capsid triggers its E3 ubiquitin ligase activity, and in concert with the heterodimeric ubiquitin conjugating enzyme complex UBE2V1-UBE2N (also known as UBC13-UEV1A complex) generates 'Lys-63'-linked polyubiquitin chains, which in turn are catalysts in the autophosphorylation of the MAP3K7/TAK1 complex (includes TAK1, TAB2, and TAB3). Activation of the MAP3K7/TAK1 complex by autophosphorylation results in the induction and expression of NF-kappa-B and MAPK-responsive inflammatory genes, thereby leading to an innate immune response in the infected cell. Plays a role in regulating autophagy through activation of autophagy regulator BECN1 by causing its dissociation from its inhibitors BCL2 and TAB2. In Saimiri boliviensis boliviensis (Bolivian squirrel monkey), this protein is Tripartite motif-containing protein 5 (TRIM5).